Reading from the N-terminus, the 223-residue chain is Endonuclease V (223 aa).

Mg(2+)-binding residues include D35 and D103.

It belongs to the endonuclease V family. It depends on Mg(2+) as a cofactor.

The protein resides in the cytoplasm. It catalyses the reaction Endonucleolytic cleavage at apurinic or apyrimidinic sites to products with a 5'-phosphate.. Functionally, DNA repair enzyme involved in the repair of deaminated bases. Selectively cleaves double-stranded DNA at the second phosphodiester bond 3' to a deoxyinosine leaving behind the intact lesion on the nicked DNA. The chain is Endonuclease V from Escherichia coli O45:K1 (strain S88 / ExPEC).